Consider the following 415-residue polypeptide: Casein kinase I isoform delta (415 aa).

Positions 9-277 (YRLGRKIGSG…YLRQLFRNLF (269 aa)) constitute a Protein kinase domain. ATP is bound by residues 15 to 23 (IGSGSFGDI) and Lys-38. The active-site Proton acceptor is Asp-128. Residues 278–364 (HRQGFSYDYV…TSPRPVSGME (87 aa)) are centrosomal localization signal (CLS). Residues 301–315 (ADDAERERRDREERL) show a composition bias toward basic and acidic residues. A disordered region spans residues 301-415 (ADDAERERRD…SSGLQSVVHR (115 aa)). The tract at residues 317–342 (HSRNPATRGLPSTASGRLRGTQEVAP) is autoinhibitory. Ser-328 and Ser-331 each carry phosphoserine. Over residues 347-358 (TPTSHTANTSPR) the composition is skewed to polar residues. Phosphoserine is present on Ser-370. Arg-375 bears the Omega-N-methylarginine mark. Over residues 380–400 (NISSSDLTGRQDTSRMSTSQI) the composition is skewed to polar residues. Residues Ser-382, Ser-383, Ser-384, Ser-407, and Ser-411 each carry the phosphoserine modification.

The protein belongs to the protein kinase superfamily. CK1 Ser/Thr protein kinase family. Casein kinase I subfamily. In terms of assembly, monomer. Component of the circadian core oscillator, which includes the CRY proteins, CLOCK, or NPAS2, ARTNL/BMAL1 or ARTNL2/BMAL2, CSNK1D and/or CSNK1E, TIMELESS and the PER proteins. Interacts with DNMT1 and MAP1A. Interacts directly with PER1 and PER2 which may lead to their degradation. Interacts with MAPT/TAU, SNAPIN, DBNDD2, AIB1/NCOA3 and ESR1. Interacts with AKAP9/AKAP450; this interaction promotes centrosomal subcellular location. Binds to tubulins in mitotic cells upon DNA damage. Interacts with GJA1. Interacts with DDX3X; this interaction enhances CSNK1D kinase activity in vitro, but it is unclear whether this interaction is physiologically relevant. Interacts with FAM83A, FAM83B, FAM83E and FAM83H (via DUF1669). In terms of processing, autophosphorylated on serine and threonine residues; this autophosphorylation represses activity. Reactivated by phosphatase-mediated dephosphorylation. May be dephosphorylated by PP1.

Its subcellular location is the cytoplasm. The protein resides in the nucleus. The protein localises to the cytoskeleton. It localises to the microtubule organizing center. It is found in the centrosome. Its subcellular location is the perinuclear region. The protein resides in the cell membrane. The protein localises to the spindle. It localises to the golgi apparatus. It catalyses the reaction L-seryl-[protein] + ATP = O-phospho-L-seryl-[protein] + ADP + H(+). It carries out the reaction L-threonyl-[protein] + ATP = O-phospho-L-threonyl-[protein] + ADP + H(+). The catalysed reaction is L-seryl-[tau protein] + ATP = O-phospho-L-seryl-[tau protein] + ADP + H(+). The enzyme catalyses L-threonyl-[tau protein] + ATP = O-phospho-L-threonyl-[tau protein] + ADP + H(+). Its activity is regulated as follows. Exhibits substrate-dependent heparin activation. Drug-mediated inhibition leads to a delay of the oscillations with the magnitude of this effect dependent upon the timing of drug administration. Inhibited by phosphorylation. In terms of biological role, essential serine/threonine-protein kinase that regulates diverse cellular growth and survival processes including Wnt signaling, DNA repair and circadian rhythms. It can phosphorylate a large number of proteins. Casein kinases are operationally defined by their preferential utilization of acidic proteins such as caseins as substrates. Phosphorylates connexin-43/GJA1, MAP1A, SNAPIN, MAPT/TAU, TOP2A, DCK, HIF1A, EIF6, p53/TP53, DVL2, DVL3, ESR1, AIB1/NCOA3, DNMT1, PKD2, YAP1, PER1 and PER2. Central component of the circadian clock. In balance with PP1, determines the circadian period length through the regulation of the speed and rhythmicity of PER1 and PER2 phosphorylation. Controls PER1 and PER2 nuclear transport and degradation. YAP1 phosphorylation promotes its SCF(beta-TRCP) E3 ubiquitin ligase-mediated ubiquitination and subsequent degradation. DNMT1 phosphorylation reduces its DNA-binding activity. Phosphorylation of ESR1 and AIB1/NCOA3 stimulates their activity and coactivation. Phosphorylation of DVL2 and DVL3 regulates WNT3A signaling pathway that controls neurite outgrowth. Phosphorylates NEDD9/HEF1. EIF6 phosphorylation promotes its nuclear export. Triggers down-regulation of dopamine receptors in the forebrain. Activates DCK in vitro by phosphorylation. TOP2A phosphorylation favors DNA cleavable complex formation. May regulate the formation of the mitotic spindle apparatus in extravillous trophoblast. Modulates connexin-43/GJA1 gap junction assembly by phosphorylation. Probably involved in lymphocyte physiology. Regulates fast synaptic transmission mediated by glutamate. This Pongo abelii (Sumatran orangutan) protein is Casein kinase I isoform delta (CSNK1D).